Reading from the N-terminus, the 266-residue chain is MLYLTKIRNAESEFTGNEQKIADFLRARVSELKSVSSRQMAKQLGISQSSIVKFAQKLGAQGFTELRMALIGEYSASREKTNATALHLHSSITSDDSLEVIARKLNREKELALEQTCALFDYARLQKIIEVISKAPFIQITGLGGSALVGRDLSFKLMKIGYRVACEADTHVQATVSQALKKGDVQIAISYSGSKKEIVLCAEAARKQGATVIAITSLADSPLRRLAHFTLDTVSGETEWRSSSMSTRTAQNSVTDLLFVGLVQHQ.

An HTH rpiR-type domain is found at 1–77 (MLYLTKIRNA…MALIGEYSAS (77 aa)). The segment at residues 37–56 (SRQMAKQLGISQSSIVKFAQ) is a DNA-binding region (H-T-H motif). The SIS domain occupies 128-266 (IIEVISKAPF…LLFVGLVQHQ (139 aa)).

In terms of assembly, homotetramer.

The protein operates within amino-sugar metabolism; N-acetylmuramate degradation [regulation]. Functionally, represses the expression of the murPQ operon involved in the uptake and degradation of N-acetylmuramic acid (MurNAc). Binds to two adjacent inverted repeats within the operator region. MurNAc 6-phosphate, the substrate of MurQ, is the specific inducer that weakens binding of MurR to the operator. The chain is HTH-type transcriptional regulator MurR from Shigella flexneri serotype 5b (strain 8401).